The primary structure comprises 674 residues: DNA ligase (674 aa).

Residues 34–38 (DADFD), 82–83 (SL), and glutamate 107 each bind NAD(+). The N6-AMP-lysine intermediate role is filled by lysine 109. NAD(+) is bound by residues arginine 130, glutamate 170, lysine 286, and lysine 310. Residues cysteine 404, cysteine 407, cysteine 423, and cysteine 429 each coordinate Zn(2+). Residues 593 to 674 (KPAQTLEGIT…FTRLLETGEA (82 aa)) form the BRCT domain.

Belongs to the NAD-dependent DNA ligase family. LigA subfamily. Requires Mg(2+) as cofactor. Mn(2+) serves as cofactor.

The enzyme catalyses NAD(+) + (deoxyribonucleotide)n-3'-hydroxyl + 5'-phospho-(deoxyribonucleotide)m = (deoxyribonucleotide)n+m + AMP + beta-nicotinamide D-nucleotide.. Its function is as follows. DNA ligase that catalyzes the formation of phosphodiester linkages between 5'-phosphoryl and 3'-hydroxyl groups in double-stranded DNA using NAD as a coenzyme and as the energy source for the reaction. It is essential for DNA replication and repair of damaged DNA. The polypeptide is DNA ligase (Corynebacterium aurimucosum (strain ATCC 700975 / DSM 44827 / CIP 107346 / CN-1) (Corynebacterium nigricans)).